Here is a 114-residue protein sequence, read N- to C-terminus: MADTGYYAGYQDDVDVDEHKRHQALYLIGIILLVTVCLIVLWVCIMLACYVPGFLKKTLEAWLNSSSLMKRRVASTLTRTPFEATGPERERNWDARRQSTTVNPASQPNTGSVF.

The chain crosses the membrane as a helical span at residues 27–47 (LIGIILLVTVCLIVLWVCIML). The interval 79 to 114 (RTPFEATGPERERNWDARRQSTTVNPASQPNTGSVF) is disordered. Over residues 86-97 (GPERERNWDARR) the composition is skewed to basic and acidic residues. Residues 98–114 (QSTTVNPASQPNTGSVF) are compositionally biased toward polar residues.

Belongs to the nanovirus movement protein family.

The protein localises to the host cell membrane. Its function is as follows. May transport viral genome to neighboring plant cells directly through plasmosdesmata, without any budding. The movement protein allows efficient cell to cell propagation, by bypassing the host cell wall barrier. The polypeptide is Putative movement protein (DNA-M) (Faba bean necrotic yellows virus (isolate Syrian SV292-88) (FBNYV)).